The sequence spans 181 residues: MEAMNVEKASADGNLPEVISNIKETLKIVSRTPVNITMAGDSGNGMSTFISALRNTGHEGKASPPTELVKATQRCASYFSSHFSNVVLWDLPGTGSATTTLENYLMEMQFNRYDFIMVASAQFSMNHVMLAKTAEDMGKKFYIVWTKLDMDLSTGALPEVQLLQIRENVLENLQKERVCEY.

Residues 32–181 enclose the IRG-type G domain; sequence TPVNITMAGD…NLQKERVCEY (150 aa). GTP contacts are provided by residues 41–48, 66–70, and 147–149; these read DSGNGMST, TELVK, and KLD.

This sequence belongs to the TRAFAC class dynamin-like GTPase superfamily. IRG family. In terms of assembly, interacts with ULK1; promoting the coassembly of ULK1 and BECN1. Interacts with BECN1; enhancing BECN1-interacting partners and influencing the composition of the BECN1 complex. Interacts with ATG16L1. Interacts with NOD2; promoting IRGM 'Lys-63'-linked polyubiquitination, which is required for interactions with the core autophagy factors. Interacts with STX17; promoting STX17 recruitment to autophagosomes. Interacts with ATG8 proteins (GABARAP, GABARAPL1, GABARAPL2, MAP1LC3A, MAP1LC3B and MAP1LC3C); promoting STX17 recruitment to autophagosomes. Interacts with TFEB; promoting association between TFEB and PPP3CB and TFEB dephosphorylation. Interacts with PPP3CB; promoting association between TFEB and PPP3CB and TFEB dephosphorylation. Interacts with NLRP3; preventing NLRP3 inflammasome assembly and promoting SQSTM1/p62-dependent autophagic degradation of NLRP3. Interacts with CGAS; promoting SQSTM1/p62-dependent autophagic degradation of CGAS. Interacts with RIGI/RIG-I; promoting SQSTM1/p62-dependent autophagic degradation of RIGI/RIG-I. Interacts with NOD1; promoting SQSTM1/p62-dependent autophagic degradation of RIGI/RIG-I. Interacts with NOD2; promoting SQSTM1/p62-dependent autophagic degradation of RIGI/RIG-I. Interacts with RIPK2; promoting SQSTM1/p62-dependent autophagic degradation of RIGI/RIG-I. Ubiquitinated via 'Lys-63'-linked polyubiquitination in a NOD2-dependent process. 'Lys-63'-linked polyubiquitination is required for interactions with the core autophagy factors. Widely expressed (at protein level). Expressed in several tissues including colon, small bowel and peripheral blood leukocytes.

It is found in the golgi apparatus membrane. The protein localises to the cell membrane. The protein resides in the cytoplasmic vesicle. Its subcellular location is the phagosome membrane. It localises to the autophagosome membrane. It is found in the lysosome membrane. The protein localises to the late endosome membrane. The protein resides in the mitochondrion membrane. Its subcellular location is the cell projection. It localises to the phagocytic cup. It is found in the mitochondrion. The catalysed reaction is GTP + H2O = GDP + phosphate + H(+). Immunity-related GTPase that plays important roles in innate immunity and inflammatory response. Acts as a dynamin-like protein that binds to intracellular membranes and promotes remodeling and trafficking of those membranes. Required for clearance of acute protozoan and bacterial infections by interacting with autophagy and lysosome regulatory proteins, thereby promoting the fusion of phagosomes with lysosomes for efficient degradation of cargo including microbes. Regulates selective autophagy, including xenophagy and mitophagy, both directly and indirectly. Directly regulates autophagy by acting as a molecular adapter that promotes the coassembly of the core autophagy machinery to mediate antimicrobial defense: IRGM (1) activates AMPK, which in turn phosphorylates ULK1 and BECN1 to induce autophagy, (2) promotes the coassembly of ULK1 and BECN1, enhancing BECN1-interacting partners and (3) influences the composition of the BECN1 complex, by competing with the negative regulators BCL2 and RUBCN, to trigger autophagy. Also activates autophagy by promoting recruitment of STX17 to autophagosomes. In collaboration with ATG8 proteins, regulate lysosomal biogenesis, a fundamental process for any autophagic pathway, by promoting TFEB dephosphorylation. Also modulates autophagy by assisting with autophagosome formation and preventing lysosomal deacidification. While activating autophagy, acts as a key negative regulator of the inflammatory and interferon responses both by (1) promoting mitophagy and (2) mediating autophagy-dependent degradation of effectors of the inflammatory response. Promotes degradation of damaged and IFNG/IFN-gamma-stressed mitochondria via mitophagy, preventing cytosolic release of ligands that activate inflammation. Acts as a suppressor of inflammation by promoting recruitment of inflammation effectors, such as CGAS, RIGI/RIG-I and NLRP3, to autophagosome membranes, leading to their SQSTM1/p62-dependent autophagic degradation. Also directly inhibits assembly of the NLRP3 inflammasome by preventing the association between NLRP3 and PYCARD. Acts as a negative regulator of antiviral innate immune response by suppressing the RIPK2-dependent pro-inflammatory response: mediates recruitment of RIPosomes, composed of RIPK2 and NOD1 or NOD2, to autophagosome membranes, promoting their SQSTM1/p62-dependent autophagic degradation. Functionally, acts as a positive regulator of mitophagy in response to intracellular mycobacteria infection: specifically binds cardiolipin, leading to its translocation to mitochondria, where it promotes affected mitochondrial fission and mitophagy. In terms of biological role, (Microbial infection) Following infection by hepatitis C virus (HCV), promotes HCV-triggered membrane remodeling, leading to autophagy and Golgi fragmentation, a step required for HCV replication. The sequence is that of Immunity-related GTPase family M protein from Homo sapiens (Human).